Here is a 302-residue protein sequence, read N- to C-terminus: 33 kDa chaperonin (302 aa).

Disulfide bonds link Cys-234/Cys-236 and Cys-267/Cys-270.

The protein belongs to the HSP33 family. In terms of processing, under oxidizing conditions two disulfide bonds are formed involving the reactive cysteines. Under reducing conditions zinc is bound to the reactive cysteines and the protein is inactive.

The protein localises to the cytoplasm. In terms of biological role, redox regulated molecular chaperone. Protects both thermally unfolding and oxidatively damaged proteins from irreversible aggregation. Plays an important role in the bacterial defense system toward oxidative stress. In Neisseria meningitidis serogroup B (strain ATCC BAA-335 / MC58), this protein is 33 kDa chaperonin.